Consider the following 119-residue polypeptide: Large ribosomal subunit protein uL18 (119 aa).

Belongs to the universal ribosomal protein uL18 family. In terms of assembly, part of the 50S ribosomal subunit; part of the 5S rRNA/L5/L18/L25 subcomplex. Contacts the 5S and 23S rRNAs.

Functionally, this is one of the proteins that bind and probably mediate the attachment of the 5S RNA into the large ribosomal subunit, where it forms part of the central protuberance. This chain is Large ribosomal subunit protein uL18, found in Chlorobium luteolum (strain DSM 273 / BCRC 81028 / 2530) (Pelodictyon luteolum).